The sequence spans 382 residues: GDP-mannose-dependent alpha-(1-6)-phosphatidylinositol monomannoside mannosyltransferase (382 aa).

GDP-alpha-D-mannose contacts are provided by arginine 200, lysine 205, isoleucine 257, and glutamate 294.

It belongs to the glycosyltransferase group 1 family. Glycosyltransferase 4 subfamily.

It carries out the reaction a 1,2-diacyl-sn-glycero-3-phospho-[alpha-D-mannopyranosyl-(1&lt;-&gt;6)-D-myo-inositol] + GDP-alpha-D-mannose = a 2,6-O-bis(alpha-D-mannopyranosyl)-1-phosphatidyl-1D-myo-inositol + GDP + H(+). It catalyses the reaction a 1,2-diacyl-sn-glycero-3-phospho-[alpha-D-6-acyl-mannopyranosyl-(1&lt;-&gt;6)-D-myo-inositol] + GDP-alpha-D-mannose = a 2-O-(alpha-D-mannosyl)-6-O-(6-O-acyl-alpha-D-mannosyl)-1-phosphatidyl-1D-myo-inositol + GDP + H(+). It participates in phospholipid metabolism; phosphatidylinositol metabolism. In terms of biological role, involved in the biosynthesis of phosphatidyl-myo-inositol mannosides (PIM) which are early precursors in the biosynthesis of lipomannans (LM) and lipoarabinomannans (LAM). Catalyzes the addition of a mannosyl residue from GDP-D-mannose (GDP-Man) to the position 6 of a phosphatidyl-myo-inositol bearing an alpha-1,2-linked mannose residue (PIM1) to generate phosphatidyl-myo-inositol bearing alpha-1,2- and alpha-1,6-linked mannose residues (Ac1PIM2). PimB also catalyzes the addition of a mannosyl residue from GDP-Man to the position 6 of phosphatidyl-myo-inositol bearing an acylated alpha-1,2-linked mannose residue (Ac1PIM1) to generate monoacylated phosphatidyl-myo-inositol bearing alpha-1,2- and alpha-1,6-linked mannose residues (Ac1PIM2). The addition of the second mannosyl residue by PimB preferentially occurs before the acylation of the mannosyl residue transferred by PimA. Also able to transfer a mannosyl residue from GDP-Man to the position 6 of a phosphatidyl-myo-inositol (PI), but this reaction is very slow. The protein is GDP-mannose-dependent alpha-(1-6)-phosphatidylinositol monomannoside mannosyltransferase of Mycolicibacterium smegmatis (strain ATCC 700084 / mc(2)155) (Mycobacterium smegmatis).